Here is a 164-residue protein sequence, read N- to C-terminus: MGDLPGLVRLSIALRIQPNDGPVFFKVDGQRFGQNRTIKLLTGSSYKVEVKIKPTTLQVENISIGGVLVPLELKGKEPDGERVVYTGIYDTEGVAPTKSGERQPIQITMPFTDIGTFETVWQVKFYNYHKRDHCQWGSPFSVIEYECKPNETRSLMWVNKESFL.

It belongs to the CNRIP family. Interacts with the cannabinoid receptor CNR1 (via C-terminus). Does not interact with cannabinoid receptor CNR2. Highly expressed in brain. Also detected in heart, lung, intestine, kidney, testis, spleen, liver and muscle (at protein level).

In terms of biological role, suppresses cannabinoid receptor CNR1-mediated tonic inhibition of voltage-gated calcium channels. The protein is CB1 cannabinoid receptor-interacting protein 1 (Cnrip1) of Mus musculus (Mouse).